A 500-amino-acid chain; its full sequence is Maturase K (500 aa).

It belongs to the intron maturase 2 family. MatK subfamily.

It localises to the plastid. It is found in the chloroplast. In terms of biological role, usually encoded in the trnK tRNA gene intron. Probably assists in splicing its own and other chloroplast group II introns. This Prunus laurocerasus (Cherry laurel) protein is Maturase K.